We begin with the raw amino-acid sequence, 204 residues long: Imidazoleglycerol-phosphate dehydratase (204 aa).

This sequence belongs to the imidazoleglycerol-phosphate dehydratase family.

It localises to the cytoplasm. It carries out the reaction D-erythro-1-(imidazol-4-yl)glycerol 3-phosphate = 3-(imidazol-4-yl)-2-oxopropyl phosphate + H2O. It participates in amino-acid biosynthesis; L-histidine biosynthesis; L-histidine from 5-phospho-alpha-D-ribose 1-diphosphate: step 6/9. The protein is Imidazoleglycerol-phosphate dehydratase of Rhodococcus jostii (strain RHA1).